The sequence spans 518 residues: 2-isopropylmalate synthase (518 aa).

Positions 5-267 constitute a Pyruvate carboxyltransferase domain; it reads VIIFDTTLRD…STNIKHKEIY (263 aa). Mn(2+)-binding residues include Asp14, His202, His204, and Asn238. Residues 392 to 518 form a regulatory domain region; that stretch reads SLSFFSVQSI…KLKTLKKVNN (127 aa).

The protein belongs to the alpha-IPM synthase/homocitrate synthase family. LeuA type 1 subfamily. Homodimer. Mn(2+) serves as cofactor.

It localises to the cytoplasm. The enzyme catalyses 3-methyl-2-oxobutanoate + acetyl-CoA + H2O = (2S)-2-isopropylmalate + CoA + H(+). It participates in amino-acid biosynthesis; L-leucine biosynthesis; L-leucine from 3-methyl-2-oxobutanoate: step 1/4. In terms of biological role, catalyzes the condensation of the acetyl group of acetyl-CoA with 3-methyl-2-oxobutanoate (2-ketoisovalerate) to form 3-carboxy-3-hydroxy-4-methylpentanoate (2-isopropylmalate). This is 2-isopropylmalate synthase from Buchnera aphidicola subsp. Schizaphis graminum (strain Sg).